Reading from the N-terminus, the 374-residue chain is Pre-B-cell leukemia transcription factor 4 (374 aa).

Residues 14–209 (PRRLDTSDVL…VMTLRSRLLD (196 aa)) enclose the PBC domain. Residues 21–100 (DVLQQIMAIT…EGVCRPEKRG (80 aa)) form a PBC-A region. Residues 103-209 (GAVARAGTAT…VMTLRSRLLD (107 aa)) are PBC-B. The segment at residues 210–272 (ARRKRRNFSK…NKRIRYKKNM (63 aa)) is a DNA-binding region (homeobox; TALE-type). Residues 333–374 (QPPPGGGCLQSQAQGSWQGATPQPATASPAGDPGSINSSTSN) form a disordered region. Polar residues predominate over residues 341 to 358 (LQSQAQGSWQGATPQPAT).

This sequence belongs to the TALE/PBX homeobox family.

It localises to the nucleus. The protein is Pre-B-cell leukemia transcription factor 4 (PBX4) of Homo sapiens (Human).